Reading from the N-terminus, the 186-residue chain is Large ribosomal subunit protein uL6 (186 aa).

This sequence belongs to the universal ribosomal protein uL6 family. In terms of assembly, part of the 50S ribosomal subunit.

In terms of biological role, this protein binds to the 23S rRNA, and is important in its secondary structure. It is located near the subunit interface in the base of the L7/L12 stalk, and near the tRNA binding site of the peptidyltransferase center. This Hyperthermus butylicus (strain DSM 5456 / JCM 9403 / PLM1-5) protein is Large ribosomal subunit protein uL6.